The chain runs to 1958 residues: Rho GTPase-activating protein 21 (1958 aa).

A disordered region spans residues 1 to 42 (MMATRRTGLSEGDGDKLKACEVSKNKDGKEQSETVSLSEDET). Basic and acidic residues predominate over residues 13-32 (DGDKLKACEVSKNKDGKEQS). S36 and S57 each carry phosphoserine. A PDZ domain is found at 50 to 159 (TVTLKRTSQG…TLELSVMPKD (110 aa)). Composition is skewed to polar residues over residues 286-295 (SNRNNHTGPS), 306-325 (SEQT…LSIP), and 418-436 (ASQS…TTLQ). Disordered stretches follow at residues 286 to 325 (SNRN…LSIP) and 418 to 458 (ASQS…QRSV). Positions 448-458 (PQSVQIRQRSV) are enriched in low complexity. S459 is subject to Phosphoserine. Omega-N-methylarginine is present on residues R554 and R575. S612, S616, and S625 each carry phosphoserine. Residues 659–687 (SLLNQQTWVRTDSAPDQQVETGKSPSLSG) are compositionally biased toward polar residues. The disordered stretch occupies residues 659–751 (SLLNQQTWVR…PSGRQTPQPL (93 aa)). S717 is subject to Phosphoserine. The span at 729-742 (LDNKEAVILREKPP) shows a compositional bias: basic and acidic residues. T747 carries the post-translational modification Phosphothreonine. Phosphoserine occurs at positions 857, 862, and 881. Residues 859 to 885 (DHESVGPPSLDAQPNSKTERSKSYDEG) form a disordered region. The segment covering 875–885 (KTERSKSYDEG) has biased composition (basic and acidic residues). The residue at position 882 (Y882) is a Phosphotyrosine. Residues S924, S926, S954, S1099, and S1115 each carry the phosphoserine modification. Residues 930 to 1097 (SDAAKEGWLH…AKSEPKTQSP (168 aa)) form an interaction with ARF1 and ARF6 region. Positions 931–1040 (DAAKEGWLHF…WIKTIQESSN (110 aa)) constitute a PH domain. The disordered stretch occupies residues 1086 to 1133 (LGAKSEPKTQSPHSPKEESERKLLSKDDTSPPKDKGTWRKGIPSIMRK). Residues 1099-1122 (SPKEESERKLLSKDDTSPPKDKGT) are compositionally biased toward basic and acidic residues. One can recognise a Rho-GAP domain in the interval 1147 to 1339 (VRLDDCPPAH…TLIQHHDWFF (193 aa)). 4 disordered regions span residues 1348–1401 (LTTV…GSGK), 1418–1575 (SRKR…KHSE), 1598–1642 (SLDS…SEFP), and 1655–1686 (RGKL…SSLD). Polar residues predominate over residues 1349-1362 (TTVQEESTVDSQPV). The span at 1383–1401 (SDSATSDSTKSKGSWGSGK) shows a compositional bias: low complexity. Phosphoserine is present on residues S1418, S1432, and S1433. Composition is skewed to basic and acidic residues over residues 1441–1466 (FFKK…ETLG) and 1477–1493 (NSTR…KISL). A Glycyl lysine isopeptide (Lys-Gly) (interchain with G-Cter in SUMO) cross-link involves residue K1444. At S1504 the chain carries Phosphoserine. T1516 carries the post-translational modification Phosphothreonine. Residue S1527 is modified to Phosphoserine. Low complexity predominate over residues 1544-1559 (SDSGTLLSTSSQASLA). The interval 1592-1861 (SATYLTSLDS…WLARERLRTS (270 aa)) is interaction with CTNNA1. The span at 1603–1612 (RLSPEVQSVA) shows a compositional bias: polar residues. Residues 1624–1634 (SELISEGRPVE) show a composition bias toward basic and acidic residues. Phosphoserine is present on S1669. The segment covering 1671–1686 (GSELSCTEGSLTSSLD) has biased composition (polar residues). T1682 bears the Phosphothreonine mark. Position 1742 is a phosphoserine (S1742). The tract at residues 1860-1958 (TSTSDLSRGE…GSKAEFHPCL (99 aa)) is disordered. Residues 1874 to 1909 (QTENPSTREIATTDTPLSLHCNTGSSSSTLASTNRP) are compositionally biased toward polar residues. S1917 is subject to Phosphoserine. A compositionally biased stretch (polar residues) spans 1918–1931 (PDQINGESFQNVSK).

In terms of assembly, interacts with GTP-bound ARF1 and ARF6. Interacts with CTNNA1. Post-translationally, sumoylated with SUMO2 and SUMO3 in proliferating lymphocytes. Widely expressed with higher expression in brain, heart, skeletal muscle and placenta.

It localises to the golgi apparatus membrane. Its subcellular location is the cell junction. The protein resides in the cytoplasmic vesicle membrane. The protein localises to the cytoplasm. It is found in the cytoskeleton. Functions as a GTPase-activating protein (GAP) for RHOA and CDC42. Downstream partner of ARF1 which may control Golgi apparatus structure and function. Also required for CTNNA1 recruitment to adherens junctions. The sequence is that of Rho GTPase-activating protein 21 (ARHGAP21) from Homo sapiens (Human).